A 396-amino-acid chain; its full sequence is MRKTMVISDLPHEIESEILSRVPTKSLAKLHTTCKRWYALFRDPRFVKKNFGKSERRLMLHSNFGVYKITDDLHGILNSGDPSLEFTSKLSNLKISEDLTITKIFHCDGLILCSTKENTRLVVWNPCTGQTRWIKPSKRYRSDDSYCLGYVNSKSSYHNYKILRYCFYYNDQDACVSEFEIYDFSSESWRVLDDYCTREWGLFCHGMSLKGNTYFVAGEKETGFFMLYFDFKTERFERLPLPYQSFDSEDTAVLSIVGGEKLAVLHQNIQSFSNEMRIWVTNKIDEAKDLTWSNFFLAVDYDIFNLPSVNNVTSFLLDEENKVAVCCDRHIDDEDKTRIYIVGVDLYKEVYKERTKGAHFNWPLLISYLPSLVHIQEKYPKDKRKGNKRRLVKRIT.

In terms of domain architecture, F-box spans 4-50 (TMVISDLPHEIESEILSRVPTKSLAKLHTTCKRWYALFRDPRFVKKN). Kelch repeat units lie at residues 163 to 209 (LRYC…GMSL), 253 to 299 (VLSI…FLAV), and 338 to 386 (RIYI…KRKG).

In Arabidopsis thaliana (Mouse-ear cress), this protein is Putative F-box/kelch-repeat protein At3g17540.